The sequence spans 149 residues: Transcription antitermination protein NusB (149 aa).

Belongs to the NusB family.

In terms of biological role, involved in transcription antitermination. Required for transcription of ribosomal RNA (rRNA) genes. Binds specifically to the boxA antiterminator sequence of the ribosomal RNA (rrn) operons. The protein is Transcription antitermination protein NusB of Caulobacter vibrioides (strain ATCC 19089 / CIP 103742 / CB 15) (Caulobacter crescentus).